Here is a 158-residue protein sequence, read N- to C-terminus: NADH-quinone oxidoreductase subunit B (158 aa).

Residues C37, C38, C102, and C132 each coordinate [4Fe-4S] cluster.

It belongs to the complex I 20 kDa subunit family. As to quaternary structure, NDH-1 is composed of 14 different subunits. Subunits NuoB, C, D, E, F, and G constitute the peripheral sector of the complex. [4Fe-4S] cluster is required as a cofactor.

It is found in the cell inner membrane. The catalysed reaction is a quinone + NADH + 5 H(+)(in) = a quinol + NAD(+) + 4 H(+)(out). Functionally, NDH-1 shuttles electrons from NADH, via FMN and iron-sulfur (Fe-S) centers, to quinones in the respiratory chain. Couples the redox reaction to proton translocation (for every two electrons transferred, four hydrogen ions are translocated across the cytoplasmic membrane), and thus conserves the redox energy in a proton gradient. The sequence is that of NADH-quinone oxidoreductase subunit B from Legionella pneumophila (strain Corby).